The primary structure comprises 680 residues: Translation factor GUF1 homolog, chloroplastic (680 aa).

A chloroplast-targeting transit peptide spans 1–51 (MAAKINSLAALVSLQASHHHHXSTPFYFSPFSPHLSTTLTSRRRSLRSAVV). The tr-type G domain occupies 83 to 264 (SNIRNFCIIA…AIVKRIPPPC (182 aa)). Residues 92–99 (AHIDHGKS), 157–161 (DTPGH), and 211–214 (NKID) each bind GTP.

This sequence belongs to the TRAFAC class translation factor GTPase superfamily. Classic translation factor GTPase family. LepA subfamily.

Its subcellular location is the plastid. It localises to the chloroplast. The enzyme catalyses GTP + H2O = GDP + phosphate + H(+). In terms of biological role, promotes chloroplast protein synthesis. May act as a fidelity factor of the translation reaction, by catalyzing a one-codon backward translocation of tRNAs on improperly translocated ribosomes. This chain is Translation factor GUF1 homolog, chloroplastic, found in Vitis vinifera (Grape).